Here is a 92-residue protein sequence, read N- to C-terminus: DNA-directed RNA polymerase subunit omega (92 aa).

This sequence belongs to the RNA polymerase subunit omega family. As to quaternary structure, the RNAP catalytic core consists of 2 alpha, 1 beta, 1 beta' and 1 omega subunit. When a sigma factor is associated with the core the holoenzyme is formed, which can initiate transcription.

It catalyses the reaction RNA(n) + a ribonucleoside 5'-triphosphate = RNA(n+1) + diphosphate. In terms of biological role, promotes RNA polymerase assembly. Latches the N- and C-terminal regions of the beta' subunit thereby facilitating its interaction with the beta and alpha subunits. In Shewanella baltica (strain OS223), this protein is DNA-directed RNA polymerase subunit omega.